The primary structure comprises 66 residues: Large ribosomal subunit protein bL35 (66 aa).

It belongs to the bacterial ribosomal protein bL35 family.

This Rhodopseudomonas palustris (strain BisB18) protein is Large ribosomal subunit protein bL35.